The chain runs to 615 residues: UvrABC system protein C (615 aa).

Positions 14-91 (TSPGCYIHKD…IKENKPKYNI (78 aa)) constitute a GIY-YIG domain. The 36-residue stretch at 196 to 231 (NKIIDELKGKMAAAAQTMEFERAAEYRDLIQAIGTL) folds into the UVR domain.

This sequence belongs to the UvrC family. In terms of assembly, interacts with UvrB in an incision complex.

It is found in the cytoplasm. In terms of biological role, the UvrABC repair system catalyzes the recognition and processing of DNA lesions. UvrC both incises the 5' and 3' sides of the lesion. The N-terminal half is responsible for the 3' incision and the C-terminal half is responsible for the 5' incision. The chain is UvrABC system protein C from Streptococcus pneumoniae (strain JJA).